The following is a 736-amino-acid chain: Oligopeptide transporter 6 (736 aa).

Helical transmembrane passes span 43-63, 66-86, 116-136, 148-168, 210-230, 258-278, 288-308, 357-377, 412-432, 443-463, 489-511, 527-547, 602-622, 645-665, and 678-698; these read MWVL…FFWY, MPLS…GHLM, VLIT…HILS, FLPA…WAGL, FFLI…YLFT, LGIG…GSPL, VAIG…WLNI, FFAV…VHVL, VPLW…MFIS, WWGV…IGVI, PVAN…TFIS, FMAQ…TAWW, WFFL…KMFP, ATAV…HFIF, and VLSG…FLAL.

This sequence belongs to the oligopeptide OPT transporter (TC 2.A.67.1) family. As to expression, expressed in flowers and roots, and at a low level in leaves and stems. Detected in the cambial zone of the vascular bundles and in the region of lateral root initiation. Low expression in the vascular network of the petals and high in the stamen filaments and the gynoecium.

The protein resides in the membrane. Involved in the translocation of tetra- and pentapeptides across the cellular membrane in an energy-dependent manner. Also involved in transport of glutathione derivatives and metal complexes, and may be involved in stress resistance. This chain is Oligopeptide transporter 6 (OPT6), found in Arabidopsis thaliana (Mouse-ear cress).